Here is a 1471-residue protein sequence, read N- to C-terminus: Myosin-4 (1471 aa).

A Myosin N-terminal SH3-like domain is found at 4–57; sequence EVGTKCWYPHKEQGWIGGEVTKNDFFEGTFHLELKLEDGETVSIETNSFENDDD. The 707-residue stretch at 71 to 777 folds into the Myosin motor domain; sequence ESTDDLTTLS…MLAFLEKLRT (707 aa). 165–172 contacts ATP; sequence GESGAGKT. The interval 647–669 is actin-binding; the sequence is LGELMAIINSTNVHYIRCIKPNS. IQ domains are found at residues 781 to 801, 804 to 824, 829 to 849, 876 to 898, and 899 to 928; these read NEIC…LQYL, MESI…TRVD, TRAA…EYYR, MLMA…DYRT, and LKRS…EVEE. Positions 938-1063 form a coiled coil; sequence GLLEEAIEFK…LAFIENVIAQ (126 aa). Residues 1164–1419 enclose the Dilute domain; the sequence is SKVLLTVESI…LNYLANVIKR (256 aa).

It belongs to the TRAFAC class myosin-kinesin ATPase superfamily. Myosin family. Interacts with SHE2 and SHE3.

The protein resides in the bud. Its function is as follows. Part of the mRNA localization machinery that restricts accumulation of certain proteins to the bud and in the daughter cell. Recruited to specific mRNAs including the ASH1 mRNA, coding for a repressor of the HO endonuclease, via its interaction with SHE3. The chain is Myosin-4 (MYO4) from Saccharomyces cerevisiae (strain ATCC 204508 / S288c) (Baker's yeast).